The primary structure comprises 103 residues: Acylphosphatase-2 (103 aa).

The residue at position 2 (Ser2) is an N-acetylserine. The region spanning 13–103 (SVDYEVFGRV…LDFSGFSTRY (91 aa)) is the Acylphosphatase-like domain. Active-site residues include Arg28 and Asn46.

It belongs to the acylphosphatase family.

The catalysed reaction is an acyl phosphate + H2O = a carboxylate + phosphate + H(+). In terms of biological role, its physiological role is not yet clear. This Gallus gallus (Chicken) protein is Acylphosphatase-2 (ACYP2).